The chain runs to 735 residues: DNA ligase 1 (735 aa).

The segment covering 1–11 (MAGDKQGDKQA) has biased composition (basic and acidic residues). Residues 1–23 (MAGDKQGDKQAETTSVPAEARER) form a disordered region. NAD(+)-binding positions include 48–52 (DAEFD), 97–98 (SL), and glutamate 128. Lysine 130 functions as the N6-AMP-lysine intermediate in the catalytic mechanism. Arginine 151, glutamate 188, lysine 305, and lysine 329 together coordinate NAD(+). The Zn(2+) site is built by cysteine 423, cysteine 426, cysteine 442, and cysteine 448. The region spanning 643–732 (EGPRPLEGLT…PEAAADVALS (90 aa)) is the BRCT domain.

Belongs to the NAD-dependent DNA ligase family. LigA subfamily. The cofactor is Mg(2+). It depends on Mn(2+) as a cofactor.

The catalysed reaction is NAD(+) + (deoxyribonucleotide)n-3'-hydroxyl + 5'-phospho-(deoxyribonucleotide)m = (deoxyribonucleotide)n+m + AMP + beta-nicotinamide D-nucleotide.. In terms of biological role, DNA ligase that catalyzes the formation of phosphodiester linkages between 5'-phosphoryl and 3'-hydroxyl groups in double-stranded DNA using NAD as a coenzyme and as the energy source for the reaction. It is essential for DNA replication and repair of damaged DNA. This Streptomyces coelicolor (strain ATCC BAA-471 / A3(2) / M145) protein is DNA ligase 1.